Here is a 460-residue protein sequence, read N- to C-terminus: G2/mitotic-specific cyclin-4 (460 aa).

The protein belongs to the cyclin family. Cyclin AB subfamily.

Functionally, essential for the control of the cell cycle at the G2/M (mitosis) transition. Interacts with the CDC2 protein kinase to form MPF. G2/M cyclins accumulate steadily during G2 and are abruptly destroyed at mitosis. The chain is G2/mitotic-specific cyclin-4 (CLB4) from Saccharomyces cerevisiae (strain ATCC 204508 / S288c) (Baker's yeast).